The primary structure comprises 726 residues: Prolyl endopeptidase-like (726 aa).

Residue S138 is modified to Phosphoserine. Residues S558, D644, and H689 each act as charge relay system in the active site.

It belongs to the peptidase S9A family. In terms of assembly, homodimer. Interacts with the AP-1 complex.

It localises to the cytoplasm. The protein resides in the cytosol. The protein localises to the golgi apparatus. Its subcellular location is the trans-Golgi network. It is found in the cytoskeleton. It localises to the nucleus. Functionally, serine peptidase whose precise substrate specificity remains unclear. Does not cleave peptides after a arginine or lysine residue. Regulates trans-Golgi network morphology and sorting by regulating the membrane binding of the AP-1 complex. May play a role in the regulation of synaptic vesicle exocytosis. This is Prolyl endopeptidase-like (Prepl) from Rattus norvegicus (Rat).